We begin with the raw amino-acid sequence, 173 residues long: Large ribosomal subunit protein uL10 (173 aa).

It belongs to the universal ribosomal protein uL10 family. Part of the ribosomal stalk of the 50S ribosomal subunit. The N-terminus interacts with L11 and the large rRNA to form the base of the stalk. The C-terminus forms an elongated spine to which L12 dimers bind in a sequential fashion forming a multimeric L10(L12)X complex.

In terms of biological role, forms part of the ribosomal stalk, playing a central role in the interaction of the ribosome with GTP-bound translation factors. In Thiobacillus denitrificans (strain ATCC 25259 / T1), this protein is Large ribosomal subunit protein uL10.